Here is a 95-residue protein sequence, read N- to C-terminus: Small ribosomal subunit protein bS6 (95 aa).

This sequence belongs to the bacterial ribosomal protein bS6 family.

In terms of biological role, binds together with bS18 to 16S ribosomal RNA. This chain is Small ribosomal subunit protein bS6, found in Corynebacterium diphtheriae (strain ATCC 700971 / NCTC 13129 / Biotype gravis).